Here is an 855-residue protein sequence, read N- to C-terminus: Beta-mannosidase B (855 aa).

Asn98 is a glycosylation site (N-linked (GlcNAc...) asparagine). The active-site Proton donor is the Glu430. N-linked (GlcNAc...) asparagine glycosylation is found at Asn693 and Asn730.

The protein belongs to the glycosyl hydrolase 2 family. Beta-mannosidase B subfamily. Homodimer.

It is found in the secreted. It carries out the reaction Hydrolysis of terminal, non-reducing beta-D-mannose residues in beta-D-mannosides.. The protein operates within glycan metabolism; N-glycan degradation. Its function is as follows. Exoglycosidase that cleaves the single beta-linked mannose residue from the non-reducing end of beta-mannosidic oligosaccharides of various complexity and length. Prefers mannobiose over mannotriose. Is also severely restricted by galactosyl substitutions at the +1 subsite. Has no activity against polymeric mannan. The protein is Beta-mannosidase B (man9) of Thermothelomyces thermophilus (Myceliophthora thermophila).